We begin with the raw amino-acid sequence, 135 residues long: ARGOS-like protein (135 aa).

The interval 71–122 is organ Size Related (OSR) domain; the sequence is FSLESMVVLVGLTASLLILPLILPPLPPPPFMLLLIPIGIMVLLMVLAFMPS. Helical transmembrane passes span 76–96 and 100–120; these read MVVLVGLTASLLILPLILPPL and PFMLLLIPIGIMVLLMVLAFM.

Belongs to the plant organ size related (OSR) protein family. Expressed in cotyledons, roots, flowers, siliques and leaves.

The protein resides in the membrane. It is found in the nucleus. It localises to the cytoplasm. The protein localises to the endoplasmic reticulum. Its function is as follows. Promotes cell expansion-dependent organ growth, probably via a brassinosteroids signaling pathway. Acts downstream of BRI1. The sequence is that of ARGOS-like protein (ARL) from Arabidopsis thaliana (Mouse-ear cress).